The primary structure comprises 172 residues: Small ribosomal subunit protein uS13c (172 aa).

The N-terminal 47 residues, 1–47, are a transit peptide targeting the chloroplast; that stretch reads MAHTLATPVAPSVSLICNTKLSVSLSSSSLAFRPVNPKNGGGLSIKC.

Component of the chloroplast small ribosomal subunit (SSU). Mature 70S chloroplast ribosomes of higher plants consist of a small (30S) and a large (50S) subunit. The 30S small subunit contains 1 molecule of ribosomal RNA (16S rRNA) and 24 different proteins. The 50S large subunit contains 3 rRNA molecules (23S, 5S and 4.5S rRNA) and 33 different proteins. uS13c interacts with translation factor pY (PSRP1).

The protein localises to the plastid. It is found in the chloroplast. Component of the chloroplast ribosome (chloro-ribosome), a dedicated translation machinery responsible for the synthesis of chloroplast genome-encoded proteins, including proteins of the transcription and translation machinery and components of the photosynthetic apparatus. In Spinacia oleracea (Spinach), this protein is Small ribosomal subunit protein uS13c (RPS13).